The chain runs to 178 residues: Large ribosomal subunit protein uL10 (178 aa).

It belongs to the universal ribosomal protein uL10 family. Part of the ribosomal stalk of the 50S ribosomal subunit. The N-terminus interacts with L11 and the large rRNA to form the base of the stalk. The C-terminus forms an elongated spine to which L12 dimers bind in a sequential fashion forming a multimeric L10(L12)X complex.

Functionally, forms part of the ribosomal stalk, playing a central role in the interaction of the ribosome with GTP-bound translation factors. The sequence is that of Large ribosomal subunit protein uL10 from Leuconostoc mesenteroides subsp. mesenteroides (strain ATCC 8293 / DSM 20343 / BCRC 11652 / CCM 1803 / JCM 6124 / NCDO 523 / NBRC 100496 / NCIMB 8023 / NCTC 12954 / NRRL B-1118 / 37Y).